Consider the following 281-residue polypeptide: Elongation factor 1-delta (281 aa).

Ala2 is modified (N-acetylalanine). Lys17 is modified (N6-acetyllysine). Phosphoserine occurs at positions 37, 44, 60, 86, and 106. Residues 80-115 (LIVRIASLEVENQNLRGVVQDLQQAISKLEVRLSTL) are leucine-zipper. Lys107 is modified (N6-acetyllysine). Residues 115 to 132 (LEKSSPTHRATAPQTQHV) show a composition bias toward polar residues. Residues 115–172 (LEKSSPTHRATAPQTQHVSPMRQVEPPAKKGATPAEDDEDNDIDLFGSDEEEEDKEAA) are disordered. Lys117 bears the N6-acetyllysine; alternate mark. Position 117 is an N6-succinyllysine; alternate (Lys117). A Phosphoserine modification is found at Ser119. Thr129 carries the post-translational modification Phosphothreonine. A Phosphoserine modification is found at Ser133. The residue at position 147 (Thr147) is a Phosphothreonine. Positions 149 to 169 (AEDDEDNDIDLFGSDEEEEDK) are enriched in acidic residues. Ser162 carries the phosphoserine; by CK2 modification. The interval 173–281 (RLREERLRQY…SVDIAAFNKI (109 aa)) is catalytic (GEF).

It belongs to the EF-1-beta/EF-1-delta family. EF-1 is composed of 4 subunits: alpha, beta, delta isoform 1, and gamma. Isoform 2 interacts with HSF1 and NFE2L2.

Its subcellular location is the nucleus. EF-1-beta and EF-1-delta stimulate the exchange of GDP bound to EF-1-alpha to GTP, regenerating EF-1-alpha for another round of transfer of aminoacyl-tRNAs to the ribosome. In terms of biological role, regulates induction of heat-shock-responsive genes through association with heat shock transcription factors and direct DNA-binding at heat shock promoter elements (HSE). In Rattus norvegicus (Rat), this protein is Elongation factor 1-delta (Eef1d).